The chain runs to 155 residues: S-ribosylhomocysteine lyase (155 aa).

Fe cation-binding residues include histidine 58, histidine 62, and cysteine 125.

It belongs to the LuxS family. Homodimer. It depends on Fe cation as a cofactor.

The enzyme catalyses S-(5-deoxy-D-ribos-5-yl)-L-homocysteine = (S)-4,5-dihydroxypentane-2,3-dione + L-homocysteine. In terms of biological role, involved in the synthesis of autoinducer 2 (AI-2) which is secreted by bacteria and is used to communicate both the cell density and the metabolic potential of the environment. The regulation of gene expression in response to changes in cell density is called quorum sensing. Catalyzes the transformation of S-ribosylhomocysteine (RHC) to homocysteine (HC) and 4,5-dihydroxy-2,3-pentadione (DPD). The chain is S-ribosylhomocysteine lyase from Helicobacter pylori (strain P12).